The primary structure comprises 1093 residues: TATA element modulatory factor (1093 aa).

2 disordered regions span residues 38–80 (WAET…SPKA) and 108–189 (TIQK…DMKV). Residues 51–70 (SPVSGGWDTSTWGLKSNTEP) are compositionally biased toward polar residues. Ser-72, Ser-77, Ser-112, and Ser-136 each carry phosphoserine. Positions 123–137 (QRPEEEVKSSLHESL) are enriched in basic and acidic residues. Polar residues predominate over residues 139–158 (IGQSRTPETTESQVKDSSLC). Residues 173 to 187 (TEGKHEETVNKESDM) are compositionally biased toward basic and acidic residues. Phosphoserine occurs at positions 199 and 217. The span at 229–238 (PKEQKHEDRQ) shows a compositional bias: basic and acidic residues. Disordered stretches follow at residues 229-260 (PKEQKHEDRQSNTPSPPVSTFSSGTSTTSDIE) and 266-285 (SVISESSASSRQETTDSKSS). A compositionally biased stretch (low complexity) spans 246–257 (VSTFSSGTSTTS). Phosphoserine occurs at positions 328, 330, 333, 338, 344, 413, 542, 925, and 928. Positions 333-342 (SLDSRSVSEI) are interaction with Elongin BC complex. Residues 439–922 (EALSEKEDVC…QETIKEKERK (484 aa)) adopt a coiled-coil conformation. The disordered stretch occupies residues 919 to 939 (KERKPFSVSSTPTMSRSSSIS). Low complexity predominate over residues 925–939 (SVSSTPTMSRSSSIS). At Thr-929 the chain carries Phosphothreonine. Ser-933 bears the Phosphoserine mark. Residues 984–1092 (SIIENLQSQL…QIDELLRQSL (109 aa)) adopt a coiled-coil conformation.

As to quaternary structure, interacts with TRNP1; may regulate TRNP1 proteasomal degradation. Component of the SNF/SWI transcription factor complexes. Interacts with RAB6A. Interacts with STAT3 and FER. Interacts with TCEB1. Phosphorylated by FER.

It is found in the cytoplasm. It localises to the nucleus. The protein localises to the golgi apparatus membrane. Its function is as follows. Potential coactivator of the androgen receptor. Mediates STAT3 degradation. May play critical roles in two RAB6-dependent retrograde transport processes: one from endosomes to the Golgi and the other from the Golgi to the ER. This protein binds the HIV-1 TATA element and inhibits transcriptional activation by the TATA-binding protein (TBP). The sequence is that of TATA element modulatory factor (TMF1) from Homo sapiens (Human).